The following is a 739-amino-acid chain: Bifunctional (p)ppGpp synthase/hydrolase RelA (739 aa).

The region spanning 50–149 (YIVHPIQVAG…VKLADRLHNM (100 aa)) is the HD domain. Residues H53 and H77 each coordinate Mn(2+). Catalysis depends on nucleophile, for hydrolase activity residues E81 and D82. D144 provides a ligand contact to Mn(2+). D264 is a binding site for Mg(2+). In terms of domain architecture, TGS spans 393–454 (ERIYVFTPTG…KTGDVVEIVT (62 aa)). One can recognise an ACT domain in the interval 664–739 (EIDIYGLNRR…DVYSVKRTNG (76 aa)).

Belongs to the RelA/SpoT family. The cofactor is Mg(2+). Mn(2+) is required as a cofactor.

It carries out the reaction GTP + ATP = guanosine 3'-diphosphate 5'-triphosphate + AMP. It catalyses the reaction guanosine 3',5'-bis(diphosphate) + H2O = GDP + diphosphate + H(+). The protein operates within purine metabolism; ppGpp biosynthesis; ppGpp from GDP: step 1/1. Its pathway is purine metabolism; ppGpp biosynthesis; ppGpp from GTP: step 1/2. With respect to regulation, alpha-beta methylenyl ATP, an ATP-analog inhibitor of the synthase activity also reduces the hydrolase activity about 4-fold. Its function is as follows. In eubacteria ppGpp (guanosine 3'-diphosphate 5'-diphosphate) is a mediator of the stringent response that coordinates a variety of cellular activities in response to changes in nutritional abundance. This enzyme catalyzes both the formation of pppGpp which is then hydrolyzed to form ppGpp, and the hydrolysis of ppGpp. The enzyme does not simultaneously display both synthase and hydrolase activities. In the structure of residues 1-385 there are 2 conformations seen, the hydrolase-OFF/synthase-ON and hydrolase-ON/synthase-OFF, suggesting there is ligand-induced signal transmission between the 2 active sites. The chain is Bifunctional (p)ppGpp synthase/hydrolase RelA (relA) from Streptococcus dysgalactiae subsp. equisimilis (Streptococcus equisimilis).